A 207-amino-acid chain; its full sequence is MSAFNWSAIAFILAAIALVVFMLVVPRLLGGRSHGSQKEEIFEAGVVGSGNARIRLSAKFYLVAIFFVIFDLEALYLYAYAVSVREAGWLGFAAAAIFITILIIGLVYELSLGAMNWAPADKLRKKARLYAAPAGFSLADITKFDGVDELMVDPTGKIPAQSSGQINVSNNIETNRRHLQNIDHINTTGNVTSVDFATSAQTDNIKR.

Transmembrane regions (helical) follow at residues 6 to 26, 62 to 82, and 87 to 107; these read WSAI…LVVP, LVAI…AYAV, and AGWL…IGLV.

The protein belongs to the complex I subunit 3 family. In terms of assembly, NDH-1 is composed of 14 different subunits. Subunits NuoA, H, J, K, L, M, N constitute the membrane sector of the complex.

Its subcellular location is the cell inner membrane. The catalysed reaction is a quinone + NADH + 5 H(+)(in) = a quinol + NAD(+) + 4 H(+)(out). Its function is as follows. NDH-1 shuttles electrons from NADH, via FMN and iron-sulfur (Fe-S) centers, to quinones in the respiratory chain. The immediate electron acceptor for the enzyme in this species is believed to be ubiquinone. Couples the redox reaction to proton translocation (for every two electrons transferred, four hydrogen ions are translocated across the cytoplasmic membrane), and thus conserves the redox energy in a proton gradient. In Psychrobacter arcticus (strain DSM 17307 / VKM B-2377 / 273-4), this protein is NADH-quinone oxidoreductase subunit A.